The primary structure comprises 119 residues: MPRVKRGVTARARHKKVIAAAKGYRGRRGNVFRIAKQAVMRAGQYAYRDRRNKKRTFRALWITRINAAVREQGLSYSVFIAGLKKAAIELDRKVLADLAVRDKAGFAAIVQQAKAALAA.

The protein belongs to the bacterial ribosomal protein bL20 family.

Binds directly to 23S ribosomal RNA and is necessary for the in vitro assembly process of the 50S ribosomal subunit. It is not involved in the protein synthesizing functions of that subunit. The chain is Large ribosomal subunit protein bL20 from Bordetella avium (strain 197N).